A 140-amino-acid chain; its full sequence is Small ribosomal subunit protein uS12 (140 aa).

Disordered regions lie at residues Thr-36–Lys-56 and Thr-117–Glu-140.

Belongs to the universal ribosomal protein uS12 family. As to quaternary structure, part of the 30S ribosomal subunit. Contacts proteins S8 and S17. May interact with IF1 in the 30S initiation complex.

With S4 and S5 plays an important role in translational accuracy. Functionally, interacts with and stabilizes bases of the 16S rRNA that are involved in tRNA selection in the A site and with the mRNA backbone. Located at the interface of the 30S and 50S subunits, it traverses the body of the 30S subunit contacting proteins on the other side and probably holding the rRNA structure together. The combined cluster of proteins S8, S12 and S17 appears to hold together the shoulder and platform of the 30S subunit. This chain is Small ribosomal subunit protein uS12, found in Malacoplasma penetrans (strain HF-2) (Mycoplasma penetrans).